A 227-amino-acid chain; its full sequence is Thymidylate kinase (227 aa).

16–23 (GIDGAGKT) contributes to the ATP binding site.

The protein belongs to the thymidylate kinase family.

The catalysed reaction is dTMP + ATP = dTDP + ADP. Functionally, phosphorylation of dTMP to form dTDP in both de novo and salvage pathways of dTTP synthesis. This chain is Thymidylate kinase, found in Xanthomonas oryzae pv. oryzae (strain MAFF 311018).